The primary structure comprises 182 residues: Nascent polypeptide-associated complex subunit alpha (182 aa).

An NAC-A/B domain is found at asparagine 17–isoleucine 81. Residues alanine 120 to aspartate 148 are disordered. Positions alanine 131 to glutamate 141 are enriched in acidic residues. The region spanning isoleucine 144–serine 182 is the UBA domain.

This sequence belongs to the NAC-alpha family. Part of the nascent polypeptide-associated complex (NAC), consisting of EGD2 and EGD1. NAC associates with ribosomes via EGD1.

Its subcellular location is the cytoplasm. The protein localises to the nucleus. Its function is as follows. Component of the nascent polypeptide-associated complex (NAC), a dynamic component of the ribosomal exit tunnel, protecting the emerging polypeptides from interaction with other cytoplasmic proteins to ensure appropriate nascent protein targeting. The NAC complex also promotes mitochondrial protein import by enhancing productive ribosome interactions with the outer mitochondrial membrane and blocks the inappropriate interaction of ribosomes translating non-secretory nascent polypeptides with translocation sites in the membrane of the endoplasmic reticulum. EGD2 may also be involved in transcription regulation. In Lodderomyces elongisporus (strain ATCC 11503 / CBS 2605 / JCM 1781 / NBRC 1676 / NRRL YB-4239) (Yeast), this protein is Nascent polypeptide-associated complex subunit alpha (EGD2).